We begin with the raw amino-acid sequence, 298 residues long: RNA exonuclease 4 (298 aa).

Residues 1–73 (MRKTVRKNKQ…EAKLKLKSAT (73 aa)) adopt a coiled-coil conformation. Residues 125-275 (FFSIDCKIIE…RDTIINVILY (151 aa)) form the Exonuclease domain.

Belongs to the REXO4 family.

It is found in the nucleus. The polypeptide is RNA exonuclease 4 (rexo4) (Dictyostelium discoideum (Social amoeba)).